We begin with the raw amino-acid sequence, 489 residues long: WRKY transcription factor 72B (489 aa).

3 disordered regions span residues 1–100, 131–159, and 234–267; these read MENK…EMRE, QKETDQKSSSTTVNTSTTHHDHESDQEAD, and DENEETSNKNLKTMRNNGDGDDVSQQNPTKRARV. Basic and acidic residues-rich tracts occupy residues 32 to 52 and 83 to 100; these read GRKEREDDKSKPSSPHHKDYM and THKEQDDQLASAKDEMRE. Positions 84–132 form a coiled coil; that stretch reads HKEQDDQLASAKDEMREVMEENQRLRMHLDRMMKEYRNLQNQFHDIVQK. Residues 138 to 147 show a composition bias toward low complexity; it reads SSSTTVNTST. A DNA-binding region (WRKY) is located at residues 273 to 339; the sequence is CDAPTMNDGC…YEGTHNHTLP (67 aa). 2 disordered regions span residues 356–381 and 427–454; these read LLSGSSNSSDPNPQVTATTTTTPTTT and TSTSSSSPSSLSHLNRMTQNFPPRYNYN. Low complexity-rich tracts occupy residues 371 to 381 and 427 to 438; these read TATTTTTPTTT and TSTSSSSPSSLS.

The protein belongs to the WRKY group II-b family.

The protein localises to the nucleus. In terms of biological role, in association with WRKY72A, contributes to basal defense against root-knot nematodes (RKNs) and potato aphids, as well as Mi-1-mediated gene-for-gene resistance to these pests. Both WRKY72A and WRKY72B are not required for gene-for-gene resistance mediated by Pto, another tomato R gene. The chain is WRKY transcription factor 72B from Solanum lycopersicum (Tomato).